The chain runs to 526 residues: Fluoride export protein 1 (526 aa).

Disordered regions lie at residues 1–73 (MMTA…RRAS) and 90–149 (ASNI…KQAG). Residues 1-159 (MMTAPSDTEG…VVAKRQKVSR (159 aa)) are Cytoplasmic-facing. 2 stretches are compositionally biased toward basic and acidic residues: residues 21-36 (SPDR…DHNH) and 103-123 (PITR…YLRE). Residues 160-180 (LATELYTISYLIFFSLLGTLA) form a helical membrane-spanning segment. At 181–194 (RLGLQALTSAYPQS) the chain is on the extracellular side. A helical transmembrane segment spans residues 195-215 (PIIFPSIWPNFAGCVVMGFLA). Residues 216 to 260 (EDRMLFRPDWGQQQPNPKKDDDDDEEAKDIDPAAAKKAHMALKKT) lie on the Cytoplasmic side of the membrane. Positions 223-242 (PDWGQQQPNPKKDDDDDEEA) are disordered. The chain crosses the membrane as a helical span at residues 261–281 (IPLYVGLATGFCGSFTSFSSF). Topologically, residues 282-310 (IRDIYLALSNDLAAHGSSAAPVSRNGGYS) are extracellular. Residues 311-331 (FMALLAVTITTISLSLSGLFA) traverse the membrane as a helical segment. The Cytoplasmic portion of the chain corresponds to 332–361 (GAHLAIAIATLFTRFDLGLPYTFVSRILDR). Residues 362–382 (LIVLLGFGCWLGAVLLSIWPP) form a helical membrane-spanning segment. Residues 383–398 (DRHSAQPEKERWRGTA) are Extracellular-facing. A helical transmembrane segment spans residues 399 to 419 (TFALVFAPLGCLTRFYASAHL). At 420–424 (NGRLP) the chain is on the cytoplasmic side. The chain crosses the membrane as a helical span at residues 425-445 (SFPLGTFVVNMLGTAVLGMAW). Topologically, residues 446–452 (DLNHVPS) are extracellular. A helical transmembrane segment spans residues 453 to 473 (LGGVVGCQVLQGVADGFCGCL). Residues 474 to 492 (TTVSTWVSELAALRRRHAY) are Cytoplasmic-facing. The helical transmembrane segment at 493 to 513 (VYGGASVGGGLALMVVVMGSL) threads the bilayer. Over 514–526 (RWTEGFGEVKCIS) the chain is Extracellular.

Belongs to the fluoride channel Fluc/FEX (TC 1.A.43) family.

The protein localises to the cell membrane. The enzyme catalyses fluoride(in) = fluoride(out). Its function is as follows. Fluoride channel required for the rapid expulsion of cytoplasmic fluoride. The polypeptide is Fluoride export protein 1 (Neurospora crassa (strain ATCC 24698 / 74-OR23-1A / CBS 708.71 / DSM 1257 / FGSC 987)).